Consider the following 456-residue polypeptide: MLRYYGATRNLPLVFSINKLMLRASSFTRPFHYSSYSLQNGDTPDKGSTNKNEIRTPNNAVWKENIELQWQHLKKKLNELYSRFNFHRDQLSFQVNKAKKSIQEANRKLSEQENEINDSRLNYNKDELTSAKIEGLPSEREQHRKKWSRKLEFYFDSLQETLFTATRALNDVTGYSGIQKLKSSISLMEKKLEATKKEHKLFKAQYANAIDERAQSQREVNELLQRQSAWSSSDLERFTQLYKNDALNARQEQELKNKVKEIESKEEQLNDDLYRAILTRYHEEQIWSDKIRRTSTWGTFILMGMNIFLFIVLQLLLEPWKRKRLVGSFEDKVKSALNEYAKEQNMKMDKLLPGKSSEVTDQGNTENSIVEEHIEQRGECKINTAEIDRPEVATAETTTTEMKSFRDIWERIKALFVTLKSIQYRKLDAPLVFDTLEFYLYSISLVSMTILVSGLI.

A mitochondrion-targeting transit peptide spans 1 to 30; sequence MLRYYGATRNLPLVFSINKLMLRASSFTRP. Residues 31–296 lie on the Mitochondrial matrix side of the membrane; sequence FHYSSYSLQN…WSDKIRRTST (266 aa). Coiled-coil stretches lie at residues 71–128 and 178–277; these read QHLK…KDEL and IQKL…YRAI. The chain crosses the membrane as a helical span at residues 297–317; it reads WGTFILMGMNIFLFIVLQLLL. The Mitochondrial intermembrane portion of the chain corresponds to 318–435; it reads EPWKRKRLVG…KLDAPLVFDT (118 aa). A helical transmembrane segment spans residues 436–456; the sequence is LEFYLYSISLVSMTILVSGLI.

It belongs to the SHE9 family. In terms of assembly, homooligomer. Participates in a complex of about 300 kDa.

Its subcellular location is the mitochondrion inner membrane. Functionally, required for the maintenance of the structure of the mitochondrial inner membrane. Involved in mitochondrial morphology. Causes growth arrest when highly overexpressed. The chain is Sensitive to high expression protein 9, mitochondrial (SHE9) from Saccharomyces cerevisiae (strain ATCC 204508 / S288c) (Baker's yeast).